Consider the following 224-residue polypeptide: Peptidyl-prolyl cis-trans isomerase FKBP3 (224 aa).

N-acetylalanine is present on A2. Residue S36 is modified to Phosphoserine. The disordered stretch occupies residues 87-119 (NVKLNEDKPKETKSEETPDEGPPKYTKSVLKKG). Positions 89–102 (KLNEDKPKETKSEE) are enriched in basic and acidic residues. K99 bears the N6-acetyllysine mark. One can recognise a PPIase FKBP-type domain in the interval 128–224 (GDVVHCWYTG…IFEVELVDID (97 aa)). Residue S152 is modified to Phosphoserine. N6-acetyllysine is present on K170.

Belongs to the FKBP-type PPIase family.

The protein resides in the nucleus. The catalysed reaction is [protein]-peptidylproline (omega=180) = [protein]-peptidylproline (omega=0). With respect to regulation, inhibited preferentially by rapamycin over FK506. FK506- and rapamycin-binding proteins (FKBPs) constitute a family of receptors for the two immunosuppressants which inhibit T-cell proliferation by arresting two distinct cytoplasmic signal transmission pathways. PPIases accelerate the folding of proteins. This Oryctolagus cuniculus (Rabbit) protein is Peptidyl-prolyl cis-trans isomerase FKBP3 (FKBP3).